A 317-amino-acid chain; its full sequence is Melanocyte-stimulating hormone receptor (317 aa).

Residues 1–37 (MPMQGAQRKLLGSLNSTPTATSNLGLAANHTGAPCLE) lie on the Extracellular side of the membrane. N-linked (GlcNAc...) asparagine glycosylation is present at Asn29. A helical membrane pass occupies residues 38–63 (VSIPDGLFLSLGLVSLVENVLVVAAI). At 64-72 (AKNRNLHSS) the chain is on the cytoplasmic side. Residues 73–93 (MYCFICCLALSDLLVSGSNML) traverse the membrane as a helical segment. At 94–118 (ETAVILLLEAGALATRTSAVQRLHN) the chain is on the extracellular side. The helical transmembrane segment at 119–140 (TIDVLTCSSMLCSLCFLGAIAV) threads the bilayer. The Cytoplasmic segment spans residues 141-163 (DRYISIFYALRYHSIVTLPRTQR). The chain crosses the membrane as a helical span at residues 164-183 (VIAAIWVASVLSSTLFITYY). At 184–191 (DHAAVLLC) the chain is on the extracellular side. Residues 192 to 211 (LVVFFLAMLVLMAVLYVHML) traverse the membrane as a helical segment. Residues 212–240 (ARACQHAHGIIRLHKRQSPAHQGFGLRGA) lie on the Cytoplasmic side of the membrane. Residues 241-266 (ATLTILLGIFFLCWGPFFLHLTLVVF) form a helical membrane-spanning segment. Residues 267 to 279 (CPQHLTCSCIFKN) lie on the Extracellular side of the membrane. A helical membrane pass occupies residues 280 to 300 (FKVFLTLIICNTIIDPLIYAF). Topologically, residues 301–317 (RSQELRRTLKEVLLCSW) are cytoplasmic. Cys315 carries S-palmitoyl cysteine lipidation.

The protein belongs to the G-protein coupled receptor 1 family. In terms of assembly, interacts with MGRN1, but does not undergo MGRN1-mediated ubiquitination; this interaction competes with GNAS-binding and thus inhibits agonist-induced cAMP production. Interacts with OPN3; the interaction results in a decrease in MC1R-mediated cAMP signaling and ultimately a decrease in melanin production in melanocytes.

Its subcellular location is the cell membrane. Its function is as follows. Receptor for MSH (alpha, beta and gamma) and ACTH. The activity of this receptor is mediated by G proteins which activate adenylate cyclase. Mediates melanogenesis, the production of eumelanin (black/brown) and phaeomelanin (red/yellow), via regulation of cAMP signaling in melanocytes. The sequence is that of Melanocyte-stimulating hormone receptor (MC1R) from Saguinus imperator (Emperor tamarin).